The following is a 943-amino-acid chain: uncharacterized protein (943 aa).

At Met-1 the chain carries N-acetylmethionine. Disordered stretches follow at residues 37-63, 152-177, 315-381, 397-472, and 515-546; these read DETP…QQQQ, KHQF…DDEV, LPMN…QQLQ, QNVP…PLKK, and EREA…ESDD. The span at 41 to 58 shows a compositional bias: polar residues; that stretch reads ISRNGNDSNINIQPSSVP. Residues 152–162 are compositionally biased toward basic residues; sequence KHQFGKSKKNT. Over residues 318–358 the composition is skewed to polar residues; sequence NNYNNHPGQFQNTPPVMPSGQQPPQQPRTLSLTNGPRYSPQ. Low complexity predominate over residues 367–381; sequence QQISQRQQQQQQQLQ. Over residues 397–409 the composition is skewed to polar residues; that stretch reads QNVPQGFNPWSPN. Residues 417–433 show a composition bias toward low complexity; that stretch reads SMKQPISQSSISSKNNS. The segment covering 434-470 has biased composition (polar residues); the sequence is AYSIPNVQNNSLTTFSPSSPTDATAMPNSTKQGSSPL. Positions 515–533 are enriched in basic and acidic residues; that stretch reads EREALVEEKEKERAEKNTE. 3 positions are modified to phosphoserine: Ser-553, Ser-586, and Ser-619. The segment at 616 to 639 is disordered; that stretch reads EFPSPGKYNSNSDNGEMNTTNEVD. Over residues 622–639 the composition is skewed to polar residues; that stretch reads KYNSNSDNGEMNTTNEVD. Position 649 is a phosphoserine (Ser-649). The disordered stretch occupies residues 654–683; sequence IPERDPKRNVSDATIKRRESDGNGRRLSNV. The span at 655 to 677 shows a compositional bias: basic and acidic residues; sequence PERDPKRNVSDATIKRRESDGNG. Phosphoserine occurs at positions 681, 766, and 771.

This is an uncharacterized protein from Saccharomyces cerevisiae (strain ATCC 204508 / S288c) (Baker's yeast).